Consider the following 195-residue polypeptide: Large ribosomal subunit protein bL27c (195 aa).

A chloroplast-targeting transit peptide spans 1-60; it reads MASMAFTLVGAFKGMSLSSPCHSSSSASFLRADRVSLSVGGGVGMGVPMTMPVRRLTIQM.

Belongs to the bacterial ribosomal protein bL27 family. In terms of assembly, part of the 50S ribosomal subunit.

The protein localises to the plastid. It is found in the chloroplast. In Oryza sativa subsp. japonica (Rice), this protein is Large ribosomal subunit protein bL27c (RPL27).